Reading from the N-terminus, the 504-residue chain is Deoxyguanosinetriphosphate triphosphohydrolase (504 aa).

Residues 66–273 (RLTHSMEVQQ…MEAADDISYC (208 aa)) form the HD domain.

This sequence belongs to the dGTPase family. Type 1 subfamily. In terms of assembly, homotetramer. It depends on Mg(2+) as a cofactor.

The catalysed reaction is dGTP + H2O = 2'-deoxyguanosine + triphosphate + H(+). Its function is as follows. dGTPase preferentially hydrolyzes dGTP over the other canonical NTPs. The polypeptide is Deoxyguanosinetriphosphate triphosphohydrolase (Citrobacter koseri (strain ATCC BAA-895 / CDC 4225-83 / SGSC4696)).